Reading from the N-terminus, the 329-residue chain is Putative L-ascorbate peroxidase 6 (329 aa).

His123 (proton acceptor) is an active-site residue. His244 provides a ligand contact to heme b.

This sequence belongs to the peroxidase family. Ascorbate peroxidase subfamily. The cofactor is heme b.

It carries out the reaction L-ascorbate + H2O2 = L-dehydroascorbate + 2 H2O. Its function is as follows. Plays a key role in hydrogen peroxide removal. In Arabidopsis thaliana (Mouse-ear cress), this protein is Putative L-ascorbate peroxidase 6 (APX6).